Reading from the N-terminus, the 30-residue chain is Natriuretic peptides A (30 aa).

Residues 1–3 constitute a propeptide that is removed on maturation; the sequence is APR. Residues cysteine 11 and cysteine 27 are joined by a disulfide bond.

This sequence belongs to the natriuretic peptide family. Post-translationally, cleaved upon secretion to produce the functional hormone.

It localises to the secreted. Hormone playing a key role in cardiovascular homeostasis through regulation of natriuresis, diuresis, and vasodilation. Has a cGMP-stimulating activity. The protein is Natriuretic peptides A of Pelophylax ridibundus (Marsh frog).